The primary structure comprises 364 residues: Long-wave-sensitive opsin 1 (364 aa).

The Extracellular portion of the chain corresponds to 1 to 52 (MAHAWGPQRLAGGQPQANFEESTQGSIFTYTNSNSTRDPFEGPNYHIAPRWV). The O-linked (GlcNAc) serine glycan is linked to S22. N34 carries an N-linked (GlcNAc...) asparagine glycan. Residues 53–77 (YHLTSAWMVFVVIASVFTNGLVLAA) traverse the membrane as a helical segment. Residues 78–89 (TMRFKKLRHPLN) are Cytoplasmic-facing. Residues 90–115 (WILVNLAIADLAETIIASTISVVNQM) form a helical membrane-spanning segment. Residues 116 to 129 (YGYFVLGHPLCVVE) are Extracellular-facing. C126 and C203 are disulfide-bonded. The chain crosses the membrane as a helical span at residues 130 to 149 (GYTVSLCGITGLWSLAIISW). The Cytoplasmic segment spans residues 150-168 (ERWMVVCKPFGNVRFDAKL). A helical transmembrane segment spans residues 169–192 (AITGIAFSWIWAAVWTAPPIFGWS). The Extracellular portion of the chain corresponds to 193 to 218 (RYWPHGLKTSCGPDVFSGSSYPGVQS). The chain crosses the membrane as a helical span at residues 219–246 (YMIVLMITCCFIPLSVIILCYLQVWLAI). Over 247–268 (RAVAKQQKESESTQKAEKEVTR) the chain is Cytoplasmic. A helical membrane pass occupies residues 269 to 292 (MVMVMIFAYCLCWGPYTFFACFAA). The Extracellular segment spans residues 293–300 (AHPGYAFH). Residues 301–325 (PLVAALPAYFAKSATIYNPIIYVFM) traverse the membrane as a helical segment. An N6-(retinylidene)lysine modification is found at K312. The Cytoplasmic segment spans residues 326 to 364 (NRQFRNCILQLFGKKVDDSSELSSVSKTEASSVSSVSPA).

It belongs to the G-protein coupled receptor 1 family. Opsin subfamily. Post-translationally, phosphorylated on some or all of the serine and threonine residues present in the C-terminal region. Expressed in retina (at protein level). Expressed in cone and/or rod photoreceptor cells (at protein level).

The protein resides in the membrane. Visual pigments are the light-absorbing molecules that mediate vision. They consist of an apoprotein, opsin, covalently linked to cis-retinal. This is Long-wave-sensitive opsin 1 (OPN1LW) from Bos taurus (Bovine).